A 143-amino-acid polypeptide reads, in one-letter code: 3-dehydroquinate dehydratase (143 aa).

Tyr21 (proton acceptor) is an active-site residue. Residues Asn73, His79, and Asp86 each coordinate substrate. Catalysis depends on His99, which acts as the Proton donor. Substrate-binding positions include 100–101 (IS) and Arg110.

It belongs to the type-II 3-dehydroquinase family. In terms of assembly, homododecamer.

The catalysed reaction is 3-dehydroquinate = 3-dehydroshikimate + H2O. It participates in metabolic intermediate biosynthesis; chorismate biosynthesis; chorismate from D-erythrose 4-phosphate and phosphoenolpyruvate: step 3/7. Catalyzes a trans-dehydration via an enolate intermediate. This is 3-dehydroquinate dehydratase from Deinococcus radiodurans (strain ATCC 13939 / DSM 20539 / JCM 16871 / CCUG 27074 / LMG 4051 / NBRC 15346 / NCIMB 9279 / VKM B-1422 / R1).